Consider the following 207-residue polypeptide: Sodium/potassium-transporting ATPase subunit beta-1-interacting protein 1 (207 aa).

The next 3 membrane-spanning stretches (helical) occupy residues 2 to 22 (GRCS…AAAL), 35 to 55 (APIL…LGTL), and 62 to 82 (LILY…IICF). The N-linked (GlcNAc...) asparagine glycan is linked to N100. A helical transmembrane segment spans residues 147-167 (ALSSALQIFLALFGFVYACYV).

The protein belongs to the NKAIN family. In terms of assembly, interacts with atp1b1 C-terminus.

It is found in the cell membrane. This is Sodium/potassium-transporting ATPase subunit beta-1-interacting protein 1 (nkain1) from Xenopus laevis (African clawed frog).